The following is a 263-amino-acid chain: Ribosomal RNA small subunit methyltransferase J (263 aa).

S-adenosyl-L-methionine contacts are provided by residues 115 to 116 (RD), 131 to 132 (ER), and Asp-181.

The protein belongs to the methyltransferase superfamily. RsmJ family.

It localises to the cytoplasm. It carries out the reaction guanosine(1516) in 16S rRNA + S-adenosyl-L-methionine = N(2)-methylguanosine(1516) in 16S rRNA + S-adenosyl-L-homocysteine + H(+). Functionally, specifically methylates the guanosine in position 1516 of 16S rRNA. The sequence is that of Ribosomal RNA small subunit methyltransferase J from Hahella chejuensis (strain KCTC 2396).